Reading from the N-terminus, the 298-residue chain is Isochorismatase domain-containing protein 1 (298 aa).

A Phosphotyrosine modification is found at Y160. K279 carries the N6-succinyllysine modification.

This sequence belongs to the isochorismatase family.

This Homo sapiens (Human) protein is Isochorismatase domain-containing protein 1 (ISOC1).